The following is a 95-amino-acid chain: Alpha-bungarotoxin isoform V31 (95 aa).

The N-terminal stretch at 1–21 is a signal peptide; it reads MKTLLLTLVVVTIVCLDLGYT. Cystine bridges form between Cys-24–Cys-44, Cys-37–Cys-65, Cys-50–Cys-54, Cys-69–Cys-80, and Cys-81–Cys-86.

Belongs to the three-finger toxin family. Long-chain subfamily. Type II alpha-neurotoxin sub-subfamily. As to quaternary structure, monomer in solution, homodimer in crystal state. Expressed by the venom gland.

The protein resides in the secreted. In terms of biological role, binds with high affinity to muscular (alpha-1/CHRNA1) and neuronal (alpha-7/CHRNA7) nicotinic acetylcholine receptor (nAChR) and inhibits acetylcholine from binding to the receptor, thereby impairing neuromuscular and neuronal transmission. The polypeptide is Alpha-bungarotoxin isoform V31 (Bungarus multicinctus (Many-banded krait)).